Here is a 232-residue protein sequence, read N- to C-terminus: tRNA-uridine aminocarboxypropyltransferase (232 aa).

Cysteine 31, cysteine 34, cysteine 41, and cysteine 43 together coordinate Zn(2+). Residues 137 to 140 (DGTW) carry the DXTW motif.

Belongs to the TDD superfamily. DTWD2 family. TapT subfamily. As to quaternary structure, monomer in solution.

The catalysed reaction is a uridine in tRNA + S-adenosyl-L-methionine = a 3-[(3S)-3-amino-3-carboxypropyl]uridine in tRNA + S-methyl-5'-thioadenosine + H(+). The enzyme catalyses uridine(47) in tRNA(Phe) + S-adenosyl-L-methionine = 3-[(3S)-3-amino-3-carboxypropyl]uridine(47) in tRNA(Phe) + S-methyl-5'-thioadenosine + H(+). With respect to regulation, the degree of the acp3U modification at U47 is dependent on the presence of the m7G modification at the preceding nucleotide G46. It also depends on medium conditions. In terms of biological role, catalyzes the formation of 3-(3-amino-3-carboxypropyl)uridine (acp3U) at position 47 of tRNAs. Acp3U47 confers thermal stability on tRNA. This is tRNA-uridine aminocarboxypropyltransferase from Escherichia coli (strain K12).